The sequence spans 126 residues: Large ribosomal subunit protein uL22 (126 aa).

The protein belongs to the universal ribosomal protein uL22 family. As to quaternary structure, part of the 50S ribosomal subunit.

Functionally, this protein binds specifically to 23S rRNA; its binding is stimulated by other ribosomal proteins, e.g. L4, L17, and L20. It is important during the early stages of 50S assembly. It makes multiple contacts with different domains of the 23S rRNA in the assembled 50S subunit and ribosome. The globular domain of the protein is located near the polypeptide exit tunnel on the outside of the subunit, while an extended beta-hairpin is found that lines the wall of the exit tunnel in the center of the 70S ribosome. This chain is Large ribosomal subunit protein uL22, found in Zymomonas mobilis subsp. mobilis (strain ATCC 31821 / ZM4 / CP4).